The following is a 350-amino-acid chain: MSTVQTVLGTITPNLLGRTLTHEHVALDFEHFYRPPPPDFECELKAKISMSTLGYVRLYPYSSKENVRFYDGEALEAAKKDVLLYKKHGGGSIVENSSYGLKRNLEFIVELAKSTGVHFIAGTGHYIHAMQDASHASLSVEQMSDLYSKDIITGLQVNGKMVKCGFIGEVASVYPIHDFEKNAIKAAGEIQEVLGCGVSMHPHRVTKAPFEIMRLYLEAGGRADKCVMSHLDRTIFDIDELLEFAKLGCYIQYDLFGTECSFYQLNTSVDMISDGQRIDNLIKLIKEGLVDKLLMSHDIHTKHRLTSYGGHGYHHIHTNILPRMFDRGVTLEQVEQMTVTNPANWLAFDP.

A divalent metal cation-binding residues include histidine 22, histidine 24, glutamate 169, histidine 201, histidine 230, and aspartate 298.

Belongs to the metallo-dependent hydrolases superfamily. Phosphotriesterase family. A divalent metal cation serves as cofactor.

This Drosophila erecta (Fruit fly) protein is Phosphotriesterase-related protein.